Consider the following 119-residue polypeptide: Large ribosomal subunit protein bL20c (119 aa).

The protein belongs to the bacterial ribosomal protein bL20 family.

The protein localises to the plastid. It localises to the chloroplast. Its function is as follows. Binds directly to 23S ribosomal RNA and is necessary for the in vitro assembly process of the 50S ribosomal subunit. It is not involved in the protein synthesizing functions of that subunit. This is Large ribosomal subunit protein bL20c from Nandina domestica (Heavenly bamboo).